Here is a 34-residue protein sequence, read N- to C-terminus: Conotoxin de13a (34 aa).

4-hydroxyproline is present on residues Pro3 and Pro7. The residue at position 14 (Trp14) is a 6'-bromotryptophan. Lys18 is modified (5-hydroxylysine). Position 21 is a 4-hydroxyproline (Pro21). The residue at position 25 (Lys25) is a 5-hydroxylysine. His32 carries the post-translational modification Histidine amide.

Post-translationally, contains 4 disulfide bonds. The diastereomeric form of 5-hydroxylysine found was not conclusively established, but it is probably 5R. Expressed by the venom duct.

The protein resides in the secreted. This Conasprella delessertii (Sozon's cone) protein is Conotoxin de13a.